The primary structure comprises 330 residues: MEEVEAANRSAIESCHGVLNLLSQRTSDPKSLTVETGEVVSKFKRVASLLTRGLGHGKFRSTNKFRSSFPQHIFLESPICCGNDLSGDYTQVLAPEPLQMVPASAVYNEMEPKHQLGHPSLMLSHKMCVDKSFLELKPPPFRAPYQLIHNHQQIAYSRSNSGVNLKFDGSGSSCYTPSVSNGSRSFVSSLSMDASVTDYDRNSFHLTGLSRGSDQQHTRKMCSGSLKCGSRSKCHCSKKRKLRVKRSIKVPAISNKIADIPPDEYSWRKYGQKPIKGSPHPRGYYKCSSVRGCPARKHVERCIDETSMLIVTYEGEHNHSRILSSQSAHT.

Positions 256 to 322 (KIADIPPDEY…YEGEHNHSRI (67 aa)) form a DNA-binding region, WRKY.

Its subcellular location is the nucleus. Functionally, transcription factor. Interacts specifically with the W box (5'-(T)TGAC[CT]-3'), a frequently occurring elicitor-responsive cis-acting element. In Arabidopsis thaliana (Mouse-ear cress), this protein is Probable WRKY transcription factor 39 (WRKY39).